The following is a 656-amino-acid chain: Acetyl-coenzyme A synthetase (656 aa).

Residues 198–201 (RGGR) and Thr316 each bind CoA. ATP is bound by residues 392 to 394 (GEP), 416 to 421 (DTFWQT), Asp507, and Arg522. Ser530 lines the CoA pocket. Arg533 contacts ATP. Residues Val544, His546, and Val549 each contribute to the Mg(2+) site. Arg591 lines the CoA pocket. Lys616 is modified (N6-acetyllysine).

The protein belongs to the ATP-dependent AMP-binding enzyme family. Mg(2+) is required as a cofactor. In terms of processing, acetylated. Deacetylation by the SIR2-homolog deacetylase activates the enzyme.

It carries out the reaction acetate + ATP + CoA = acetyl-CoA + AMP + diphosphate. Catalyzes the conversion of acetate into acetyl-CoA (AcCoA), an essential intermediate at the junction of anabolic and catabolic pathways. AcsA undergoes a two-step reaction. In the first half reaction, AcsA combines acetate with ATP to form acetyl-adenylate (AcAMP) intermediate. In the second half reaction, it can then transfer the acetyl group from AcAMP to the sulfhydryl group of CoA, forming the product AcCoA. In Rhodobacter capsulatus (strain ATCC BAA-309 / NBRC 16581 / SB1003), this protein is Acetyl-coenzyme A synthetase.